Reading from the N-terminus, the 503-residue chain is Probable cytosol aminopeptidase (503 aa).

The Mn(2+) site is built by K268 and D273. K280 is a catalytic residue. Mn(2+) contacts are provided by D291, D350, and E352. The active site involves R354.

It belongs to the peptidase M17 family. Mn(2+) serves as cofactor.

The protein localises to the cytoplasm. The catalysed reaction is Release of an N-terminal amino acid, Xaa-|-Yaa-, in which Xaa is preferably Leu, but may be other amino acids including Pro although not Arg or Lys, and Yaa may be Pro. Amino acid amides and methyl esters are also readily hydrolyzed, but rates on arylamides are exceedingly low.. It catalyses the reaction Release of an N-terminal amino acid, preferentially leucine, but not glutamic or aspartic acids.. In terms of biological role, presumably involved in the processing and regular turnover of intracellular proteins. Catalyzes the removal of unsubstituted N-terminal amino acids from various peptides. The sequence is that of Probable cytosol aminopeptidase from Corynebacterium efficiens (strain DSM 44549 / YS-314 / AJ 12310 / JCM 11189 / NBRC 100395).